The chain runs to 80 residues: Large ribosomal subunit protein uL24 (80 aa).

This sequence belongs to the universal ribosomal protein uL24 family. Part of the 50S ribosomal subunit.

Its function is as follows. One of two assembly initiator proteins, it binds directly to the 5'-end of the 23S rRNA, where it nucleates assembly of the 50S subunit. Functionally, one of the proteins that surrounds the polypeptide exit tunnel on the outside of the subunit. The protein is Large ribosomal subunit protein uL24 of Chlorobium phaeobacteroides (strain DSM 266 / SMG 266 / 2430).